A 184-amino-acid polypeptide reads, in one-letter code: Ribosome-recycling factor (184 aa).

It belongs to the RRF family.

Its subcellular location is the cytoplasm. Functionally, responsible for the release of ribosomes from messenger RNA at the termination of protein biosynthesis. May increase the efficiency of translation by recycling ribosomes from one round of translation to another. The protein is Ribosome-recycling factor of Desulfotalea psychrophila (strain LSv54 / DSM 12343).